We begin with the raw amino-acid sequence, 219 residues long: GPI ethanolamine phosphate transferase, stabilizing subunit (219 aa).

6 consecutive transmembrane segments (helical) span residues 11–31 (YTNLLCVFSIFLSIFIPSFFV), 42–62 (TWLCICSASVTTVNLLSYLVV), 86–106 (CFLMSCFLLHIIFVLYGAPLI), 113–133 (FLFAVVLSTFTTVPCLCLLGP), 155–175 (LQITTISSFTGAWLGAFPIPL), and 189–209 (TLGATFGYVAGLVISPLWIYW).

It belongs to the PIGF family. In terms of assembly, part of the ethanolamine phosphate transferase 3 complex composed by PIGO and PIGF. Part of the ethanolamine phosphate transferase 2 complex with PIGG. PIGF is required to stabilize PIGG and PIGO.

The protein localises to the endoplasmic reticulum membrane. The protein operates within glycolipid biosynthesis; glycosylphosphatidylinositol-anchor biosynthesis. Functionally, stabilizing subunit of the ethanolamine phosphate transferase 3 and ethanolamine phosphate transferase 2 complexes that sequentially transfer an ethanolamine phosphate (EtNP) from a phosphatidylethanolamine (PE) to the 6-OH position of the third alpha-1,2-linked mannose and the second alpha-1,6-linked mannose of the alpha-D-Man-(1-&gt;2)-alpha-D-Man-(1-&gt;6)-2-PEtn-alpha-D-Man-(1-&gt;4)-alpha-D-GlcN-(1-&gt;6)-(1-radyl,2-acyl-sn-glycero-3-phospho)-2-acyl-inositol (also termed H6) intermediate to generate a 6-PEtn-alpha-D-Man-(1-&gt;2)-6-PEtn-alpha-D-Man-(1-&gt;6)-2-PEtn-alpha-D-Man-(1-&gt;4)-alpha-D-GlcN-(1-&gt;6)-(1-radyl,2-acyl-sn-glycero-3-phospho)-2-acyl-inositol (also termed H8). Participates in the tenth and eleventh steps of the glycosylphosphatidylinositol-anchor biosynthesis, in association with PIGO and PIGG, respectively. This chain is GPI ethanolamine phosphate transferase, stabilizing subunit, found in Mus musculus (Mouse).